Reading from the N-terminus, the 276-residue chain is Large ribosomal subunit protein uL2 (276 aa).

Residues 224–276 form a disordered region; the sequence is AMNPIDHPHGGGEGKTSGGRNPVTPWGVPTKGKKTRKRNKSSNKYIKRVSDKG. Positions 254 to 270 are enriched in basic residues; the sequence is KGKKTRKRNKSSNKYIK.

Belongs to the universal ribosomal protein uL2 family. In terms of assembly, part of the 50S ribosomal subunit. Forms a bridge to the 30S subunit in the 70S ribosome.

Functionally, one of the primary rRNA binding proteins. Required for association of the 30S and 50S subunits to form the 70S ribosome, for tRNA binding and peptide bond formation. It has been suggested to have peptidyltransferase activity; this is somewhat controversial. Makes several contacts with the 16S rRNA in the 70S ribosome. The sequence is that of Large ribosomal subunit protein uL2 from Ehrlichia chaffeensis (strain ATCC CRL-10679 / Arkansas).